Reading from the N-terminus, the 180-residue chain is Aspartate 1-decarboxylase (180 aa).

Ser-24 serves as the catalytic Schiff-base intermediate with substrate; via pyruvic acid. Ser-24 carries the pyruvic acid (Ser) modification. A substrate-binding site is contributed by Thr-56. Tyr-57 serves as the catalytic Proton donor. 72–74 is a substrate binding site; the sequence is GAA.

It belongs to the PanD family. In terms of assembly, heterooctamer of four alpha and four beta subunits. It depends on pyruvate as a cofactor. Is synthesized initially as an inactive proenzyme, which is activated by self-cleavage at a specific serine bond to produce a beta-subunit with a hydroxyl group at its C-terminus and an alpha-subunit with a pyruvoyl group at its N-terminus.

It is found in the cytoplasm. It carries out the reaction L-aspartate + H(+) = beta-alanine + CO2. Its pathway is cofactor biosynthesis; (R)-pantothenate biosynthesis; beta-alanine from L-aspartate: step 1/1. In terms of biological role, catalyzes the pyruvoyl-dependent decarboxylation of aspartate to produce beta-alanine. The protein is Aspartate 1-decarboxylase of Paramagnetospirillum magneticum (strain ATCC 700264 / AMB-1) (Magnetospirillum magneticum).